Here is a 560-residue protein sequence, read N- to C-terminus: Long-chain-fatty-acid--CoA ligase (560 aa).

The protein belongs to the ATP-dependent AMP-binding enzyme family.

It carries out the reaction a long-chain fatty acid + ATP + CoA = a long-chain fatty acyl-CoA + AMP + diphosphate. The polypeptide is Long-chain-fatty-acid--CoA ligase (lcfA) (Bacillus subtilis (strain 168)).